The chain runs to 477 residues: Probable ribonuclease FAU-1 (477 aa).

Belongs to the FAU-1 family.

Probable RNase involved in rRNA stability through maturation and/or degradation of precursor rRNAs. Binds to RNA in loop regions with AU-rich sequences. The protein is Probable ribonuclease FAU-1 of Staphylothermus marinus (strain ATCC 43588 / DSM 3639 / JCM 9404 / F1).